We begin with the raw amino-acid sequence, 171 residues long: Probable chorismate pyruvate-lyase (171 aa).

The substrate site is built by M36, R78, L116, and E157.

This sequence belongs to the UbiC family.

It is found in the cytoplasm. It catalyses the reaction chorismate = 4-hydroxybenzoate + pyruvate. The protein operates within cofactor biosynthesis; ubiquinone biosynthesis. Functionally, removes the pyruvyl group from chorismate, with concomitant aromatization of the ring, to provide 4-hydroxybenzoate (4HB) for the ubiquinone pathway. This chain is Probable chorismate pyruvate-lyase, found in Bartonella bacilliformis (strain ATCC 35685 / KC583 / Herrer 020/F12,63).